A 293-amino-acid chain; its full sequence is Protein YIF1A (293 aa).

A disordered region spans residues 1-33; that stretch reads MAYHSGYGAHGSKHRARAAPDPPPLFDDTSGGY. Alanine 2 is subject to N-acetylalanine. Topologically, residues 2 to 138 are cytoplasmic; the sequence is AYHSGYGAHG…PPRQDLNAPD (137 aa). Serine 12 bears the Phosphoserine mark. The helical transmembrane segment at 139 to 159 threads the bilayer; it reads LYIPTMAFITYVLLAGMALGI. The Lumenal segment spans residues 160–174; sequence QKRFSPEVLGLCAST. Residues 175-195 traverse the membrane as a helical segment; it reads ALVWVVMEVLALLLGLYLATV. At 196-203 the chain is on the cytoplasmic side; sequence RSDLSTFH. The chain crosses the membrane as a helical span at residues 204 to 226; it reads LLAYSGYKYVGMILSVLTGLLFG. Over 227–229 the chain is Lumenal; the sequence is SDG. Residues 230 to 249 traverse the membrane as a helical segment; that stretch reads YYVALAWTSSALMYFIVRSL. The Cytoplasmic portion of the chain corresponds to 250–271; the sequence is RTAALGPDSMGGPVPRQRLQLY. A helical membrane pass occupies residues 272 to 292; the sequence is LTLGAAAFQPLIIYWLTFHLV.

This sequence belongs to the YIF1 family. As to quaternary structure, interacts with YIPF5.

The protein localises to the endoplasmic reticulum membrane. It is found in the golgi apparatus membrane. The protein resides in the endoplasmic reticulum-Golgi intermediate compartment membrane. Possible role in transport between endoplasmic reticulum and Golgi. The polypeptide is Protein YIF1A (YIF1A) (Homo sapiens (Human)).